The following is a 369-amino-acid chain: Probable serine/threonine-protein kinase DDB_G0291350 (369 aa).

In terms of domain architecture, Protein kinase spans 22–367; sequence YTVNRILGEG…QVIERINQII (346 aa). ATP is bound by residues 28–36 and Lys51; that span reads LGEGGFSFV. Residue Asp159 is the Proton acceptor of the active site. The interval 169-225 is disordered; sequence NLRRPSNNNNNNNNNNNNNNNNNNNNNNNNNNNNNNNNNNNNNNNNNNNNNNNSEDS. Positions 175 to 221 are enriched in low complexity; that stretch reads NNNNNNNNNNNNNNNNNNNNNNNNNNNNNNNNNNNNNNNNNNNNNNN.

Belongs to the protein kinase superfamily. Ser/Thr protein kinase family.

The enzyme catalyses L-seryl-[protein] + ATP = O-phospho-L-seryl-[protein] + ADP + H(+). The catalysed reaction is L-threonyl-[protein] + ATP = O-phospho-L-threonyl-[protein] + ADP + H(+). This is Probable serine/threonine-protein kinase DDB_G0291350 from Dictyostelium discoideum (Social amoeba).